The following is a 434-amino-acid chain: UPF0597 protein CLI_2075 (434 aa).

It belongs to the UPF0597 family.

The polypeptide is UPF0597 protein CLI_2075 (Clostridium botulinum (strain Langeland / NCTC 10281 / Type F)).